A 262-amino-acid polypeptide reads, in one-letter code: ATP synthase subunit a 1 (262 aa).

5 helical membrane passes run 30 to 50, 91 to 111, 131 to 151, 201 to 221, and 232 to 252; these read TVHI…ILVF, IAPL…MDLI, IVPT…FALM, LFGN…LMPW, and AIFH…LTIV.

This sequence belongs to the ATPase A chain family. In terms of assembly, F-type ATPases have 2 components, CF(1) - the catalytic core - and CF(0) - the membrane proton channel. CF(1) has five subunits: alpha(3), beta(3), gamma(1), delta(1), epsilon(1). CF(0) has three main subunits: a(1), b(2) and c(9-12). The alpha and beta chains form an alternating ring which encloses part of the gamma chain. CF(1) is attached to CF(0) by a central stalk formed by the gamma and epsilon chains, while a peripheral stalk is formed by the delta and b chains.

It is found in the cell inner membrane. Its function is as follows. Key component of the proton channel; it plays a direct role in the translocation of protons across the membrane. This is ATP synthase subunit a 1 from Photobacterium profundum (strain SS9).